The primary structure comprises 354 residues: tRNA N6-adenosine threonylcarbamoyltransferase (354 aa).

Positions 111 and 115 each coordinate Fe cation. Substrate is bound by residues 134 to 138 (LVSGG), Asp167, Gly180, and Asn279. Fe cation is bound at residue Asp319.

It belongs to the KAE1 / TsaD family. The cofactor is Fe(2+).

The protein resides in the cytoplasm. It carries out the reaction L-threonylcarbamoyladenylate + adenosine(37) in tRNA = N(6)-L-threonylcarbamoyladenosine(37) in tRNA + AMP + H(+). Functionally, required for the formation of a threonylcarbamoyl group on adenosine at position 37 (t(6)A37) in tRNAs that read codons beginning with adenine. Is involved in the transfer of the threonylcarbamoyl moiety of threonylcarbamoyl-AMP (TC-AMP) to the N6 group of A37, together with TsaE and TsaB. TsaD likely plays a direct catalytic role in this reaction. The sequence is that of tRNA N6-adenosine threonylcarbamoyltransferase from Neisseria meningitidis serogroup B (strain ATCC BAA-335 / MC58).